Reading from the N-terminus, the 105-residue chain is NADH dehydrogenase [ubiquinone] 1 beta subcomplex subunit 2, mitochondrial (105 aa).

A mitochondrion-targeting transit peptide spans 1–33 (MSALTRLVPFGRVGGRLLRGCRARAAGDSGVRH). Residues 86–105 (YPDPSQWTDEELGIPPDDED) form a disordered region. The segment covering 93–105 (TDEELGIPPDDED) has biased composition (acidic residues).

The protein belongs to the complex I NDUFB2 subunit family. As to quaternary structure, complex I is composed of 45 different subunits.

Its subcellular location is the mitochondrion inner membrane. Accessory subunit of the mitochondrial membrane respiratory chain NADH dehydrogenase (Complex I), that is believed not to be involved in catalysis. Complex I functions in the transfer of electrons from NADH to the respiratory chain. The immediate electron acceptor for the enzyme is believed to be ubiquinone. The protein is NADH dehydrogenase [ubiquinone] 1 beta subcomplex subunit 2, mitochondrial (Ndufb2) of Mus musculus (Mouse).